The following is a 134-amino-acid chain: MTLNIRVIAPDRTVWDANAEEVILPSSTGQVGILKGHIPLLTAIDIGVMRVRIEKEWQPIILLGGFAEVKDDKITILVNGAEEVSKIEIKAAKENLEKATKILNEARNDKDKIEATQNLRRARARIQAANVLAN.

Belongs to the ATPase epsilon chain family. As to quaternary structure, F-type ATPases have 2 components, CF(1) - the catalytic core - and CF(0) - the membrane proton channel. CF(1) has five subunits: alpha(3), beta(3), gamma(1), delta(1), epsilon(1). CF(0) has three main subunits: a, b and c.

The protein localises to the plastid. It is found in the chloroplast thylakoid membrane. Produces ATP from ADP in the presence of a proton gradient across the membrane. The polypeptide is ATP synthase epsilon chain, chloroplastic (Gracilaria tenuistipitata var. liui (Red alga)).